The primary structure comprises 349 residues: UPF0324 inner membrane protein YeiH (349 aa).

At 1–12 the chain is on the periplasmic side; the sequence is MTELTLQNHRRT. The chain crosses the membrane as a helical span at residues 13–35; sequence MWHFIPGLALSAVITGVALWGGA. At 36–38 the chain is on the cytoplasmic side; sequence IPA. The chain crosses the membrane as a helical span at residues 39-61; sequence VAGAGFSALTLAILLGMVIGNTV. Residues 62–99 lie on the Periplasmic side of the membrane; that stretch reads YPQIWKQCDGGVLFAKQHLLRLGIILYGFRLTFSQIAD. The chain crosses the membrane as a helical span at residues 100–122; sequence VGISGIVIDVLTLSSTFMLACFL. At 123–131 the chain is on the cytoplasmic side; it reads GQKVFGLDR. A helical transmembrane segment spans residues 132–151; it reads HTSWLIGAGSSICGAAAVLA. The Periplasmic segment spans residues 152-162; it reads TEPVVKAEASK. The chain crosses the membrane as a helical span at residues 163–185; the sequence is VTVAVATVVIFGTIAIFLYPAMY. At 186-261 the chain is on the cytoplasmic side; sequence PLLAHWFSPE…SPATGAEKSK (76 aa). The helical transmembrane segment at 262–284 threads the bilayer; sequence ITIPWFAIFFIVVAIFNSFHLLP. The Periplasmic portion of the chain corresponds to 285–290; that stretch reads KAVVDM. A helical membrane pass occupies residues 291 to 313; that stretch reads LVTLDTVLLAMAMAALGLTTHVS. At 314–322 the chain is on the cytoplasmic side; it reads ALKKAGAKP. A helical transmembrane segment spans residues 323 to 345; sequence LLMALALFAWLIIGGGAINVLIH. Residues 346 to 349 lie on the Periplasmic side of the membrane; sequence SLIA.

The protein belongs to the UPF0324 family.

The protein resides in the cell inner membrane. The protein is UPF0324 inner membrane protein YeiH (yeiH) of Salmonella typhi.